The sequence spans 306 residues: Methyl-CpG-binding domain-containing protein 7 (306 aa).

Polar residues predominate over residues 1–11; the sequence is MQTRSSSSPSA. The disordered stretch occupies residues 1–21; it reads MQTRSSSSPSANHRRETQLQI. 3 consecutive MBD domains span residues 21–92, 106–171, and 172–242; these read IADP…QDKT, GVEY…RVLQ, and NRRG…ERLP. Asymmetric dimethylarginine is present on residues R118, R145, and R174. Residues 163 to 306 are required for interaction with PRMT11; sequence IEQQLRVLQN…AFVSLIEDRS (144 aa).

As to quaternary structure, interacts with PRMT11. Interacts (via C-terminus) with IDM2, but not with IDM1. Interacts with IDM3. Part of a complex made of MBD7, IDM1, IDM2 and IDM3. Post-translationally, methylated by PRMT11. As to expression, expressed in leaves, buds, flowers, stems, siliques, mature seeds and roots.

Its subcellular location is the nucleus. It localises to the chromosome. Transcriptional regulator that binds CpG islands in promoters where the DNA is methylated at position 5 of cytosine within CpG dinucleotides. May directly affect chromatin structure by inducing intra- and inter- chromatin compaction via bridging over multiple methylated CpG sites. Acts as an anti-silencing factor that prevents DNA hypermethylation and gene repression. Requires high mCG density for binding. Recognizes preferentially mCGs located in transposable elements. Required for active DNA demethylation. Prefers to target genomic loci around chromocenters. The polypeptide is Methyl-CpG-binding domain-containing protein 7 (Arabidopsis thaliana (Mouse-ear cress)).